Consider the following 94-residue polypeptide: Large ribosomal subunit protein eL43A (94 aa).

The C4-type zinc finger occupies 39–62 (CPFCGRNTVKRTAAGIWCCNGKGC).

It belongs to the eukaryotic ribosomal protein eL43 family. In terms of assembly, component of the large ribosomal subunit (LSU). Mature yeast ribosomes consist of a small (40S) and a large (60S) subunit. The 40S small subunit contains 1 molecule of ribosomal RNA (18S rRNA) and at least 33 different proteins. The large 60S subunit contains 3 rRNA molecules (25S, 5.8S and 5S rRNA) and at least 46 different proteins.

It is found in the cytoplasm. Functionally, component of the ribosome, a large ribonucleoprotein complex responsible for the synthesis of proteins in the cell. The small ribosomal subunit (SSU) binds messenger RNAs (mRNAs) and translates the encoded message by selecting cognate aminoacyl-transfer RNA (tRNA) molecules. The large subunit (LSU) contains the ribosomal catalytic site termed the peptidyl transferase center (PTC), which catalyzes the formation of peptide bonds, thereby polymerizing the amino acids delivered by tRNAs into a polypeptide chain. The nascent polypeptides leave the ribosome through a tunnel in the LSU and interact with protein factors that function in enzymatic processing, targeting, and the membrane insertion of nascent chains at the exit of the ribosomal tunnel. The polypeptide is Large ribosomal subunit protein eL43A (rpl4301) (Schizosaccharomyces pombe (strain 972 / ATCC 24843) (Fission yeast)).